The following is a 364-amino-acid chain: Putative agmatine deiminase (364 aa).

The active-site Amidino-cysteine intermediate is cysteine 355.

This sequence belongs to the agmatine deiminase family.

The enzyme catalyses agmatine + H2O = N-carbamoylputrescine + NH4(+). This chain is Putative agmatine deiminase, found in Mycoplasma capricolum subsp. capricolum (strain California kid / ATCC 27343 / NCTC 10154).